The primary structure comprises 128 residues: Class I hydrophobin 19 (128 aa).

4 disulfide bridges follow: cysteine 48-cysteine 107, cysteine 55-cysteine 101, cysteine 56-cysteine 88, and cysteine 108-cysteine 121. Residue asparagine 110 is glycosylated (N-linked (GlcNAc...) asparagine).

Belongs to the fungal hydrophobin family. In terms of assembly, self-assembles to form functional amyloid fibrils called rodlets. Self-assembly into fibrillar rodlets occurs spontaneously at hydrophobic:hydrophilic interfaces and the rodlets further associate laterally to form amphipathic monolayers.

It localises to the secreted. It is found in the cell wall. Aerial growth, conidiation, and dispersal of filamentous fungi in the environment rely upon a capability of their secreting small amphipathic proteins called hydrophobins (HPBs) with low sequence identity. Class I can self-assemble into an outermost layer of rodlet bundles on aerial cell surfaces, conferring cellular hydrophobicity that supports fungal growth, development and dispersal; whereas Class II form highly ordered films at water-air interfaces through intermolecular interactions but contribute nothing to the rodlet structure. This Pleurotus ostreatus (strain PC15) (Oyster mushroom) protein is Class I hydrophobin 19.